Reading from the N-terminus, the 994-residue chain is Pre-mRNA-processing ATP-dependent RNA helicase PRP5 (994 aa).

Over residues 1–18 the composition is skewed to polar residues; that stretch reads MTLPSGDSSITNNTNQTL. Disordered regions lie at residues 1 to 105, 170 to 190, and 235 to 275; these read MTLP…SLEE, FVNE…EEEF, and SESF…EQEQ. Basic and acidic residues-rich tracts occupy residues 20–32 and 70–79; these read EDEK…EKLA and TTKRNEKQKV. A coiled-coil region spans residues 20–87; that stretch reads EDEKRRLRRE…KVENSFAKLN (68 aa). The span at 84 to 102 shows a compositional bias: polar residues; sequence AKLNSTSIDHSSTETQATS. Basic and acidic residues predominate over residues 172–181; sequence NEDKEGGGGK. 2 coiled-coil regions span residues 217-284 and 310-382; these read VLEE…RYLA and DDED…GKNV. Residues 235-245 are compositionally biased toward polar residues; the sequence is SESFVDNNNGG. Positions 387-416 match the Q motif motif; it reads LTWGQLLMPESVMSVIQNDLGFAKPSPIQC. Residues 419–597 enclose the Helicase ATP-binding domain; it reads IPIVLSGRDM…KKVLHNPIEI (179 aa). 432-439 serves as a coordination point for ATP; sequence AKTGSGKT. The DEAD box signature appears at 545 to 548; the sequence is DEAD. Residues 629–780 enclose the Helicase C-terminal domain; it reads KLEDILSRFF…AVDSKLQEIA (152 aa). The interval 842 to 867 is disordered; it reads YFGSSSSSSSFPSSSNTTTTTTTTST. Low complexity predominate over residues 845–867; the sequence is SSSSSSSFPSSSNTTTTTTTTST.

This sequence belongs to the DEAD box helicase family. DDX46/PRP5 subfamily.

It localises to the nucleus. The catalysed reaction is ATP + H2O = ADP + phosphate + H(+). In terms of biological role, ATP-dependent RNA helicase involved spliceosome assembly and in nuclear splicing. Catalyzes an ATP-dependent conformational change of U2 snRNP. Bridges U1 and U2 snRNPs and enables stable U2 snRNP association with intron RNA. The polypeptide is Pre-mRNA-processing ATP-dependent RNA helicase PRP5 (PRP5) (Lodderomyces elongisporus (strain ATCC 11503 / CBS 2605 / JCM 1781 / NBRC 1676 / NRRL YB-4239) (Yeast)).